Here is a 135-residue protein sequence, read N- to C-terminus: Probable histone H2A.8 (135 aa).

Belongs to the histone H2A family. The nucleosome is a histone octamer containing two molecules each of H2A, H2B, H3 and H4 assembled in one H3-H4 heterotetramer and two H2A-H2B heterodimers. The octamer wraps approximately 147 bp of DNA.

It is found in the nucleus. The protein resides in the chromosome. Core component of nucleosome. Nucleosomes wrap and compact DNA into chromatin, limiting DNA accessibility to the cellular machineries which require DNA as a template. Histones thereby play a central role in transcription regulation, DNA repair, DNA replication and chromosomal stability. DNA accessibility is regulated via a complex set of post-translational modifications of histones, also called histone code, and nucleosome remodeling. In Oryza sativa subsp. indica (Rice), this protein is Probable histone H2A.8.